A 183-amino-acid polypeptide reads, in one-letter code: Peptide deformylase (183 aa).

Positions 110 and 153 each coordinate Fe cation. The active site involves glutamate 154. Histidine 157 is a Fe cation binding site.

It belongs to the polypeptide deformylase family. Fe(2+) is required as a cofactor.

The catalysed reaction is N-terminal N-formyl-L-methionyl-[peptide] + H2O = N-terminal L-methionyl-[peptide] + formate. In terms of biological role, removes the formyl group from the N-terminal Met of newly synthesized proteins. Requires at least a dipeptide for an efficient rate of reaction. N-terminal L-methionine is a prerequisite for activity but the enzyme has broad specificity at other positions. The protein is Peptide deformylase of Listeria welshimeri serovar 6b (strain ATCC 35897 / DSM 20650 / CCUG 15529 / CIP 8149 / NCTC 11857 / SLCC 5334 / V8).